The chain runs to 583 residues: Undecaprenyl phosphate-alpha-4-amino-4-deoxy-L-arabinose arabinosyl transferase 2 (583 aa).

Residues 1–20 (MTSRIQMHRTSPPPAYGTSA) are disordered. Transmembrane regions (helical) follow at residues 42–62 (LLLV…GLWI), 113–135 (LFGV…YLIT), 145–165 (SFAA…AGYS), 166–186 (NLDP…WFAL), 209–229 (FMTK…PYMI), 241–261 (GLVA…SIHA), 290–310 (WWFY…LLPG), 321–341 (QAPT…FSLS), 345–365 (LPTY…SALI), 380–400 (SLLN…IQLT), 409–429 (MLGL…NLLP), and 440–460 (PALG…GFIV).

This sequence belongs to the glycosyltransferase 83 family.

The protein resides in the cell inner membrane. The catalysed reaction is 4-amino-4-deoxy-alpha-L-arabinopyranosyl di-trans,octa-cis-undecaprenyl phosphate + lipid IVA = lipid IIA + di-trans,octa-cis-undecaprenyl phosphate.. It participates in lipopolysaccharide metabolism; 4-amino-4-deoxy-beta-L-arabinose-lipid A biosynthesis. Its function is as follows. Catalyzes the transfer of the L-Ara4N moiety of the glycolipid undecaprenyl phosphate-alpha-L-Ara4N to lipid A. The modified arabinose is attached to lipid A and is required for resistance to polymyxin and cationic antimicrobial peptides. This chain is Undecaprenyl phosphate-alpha-4-amino-4-deoxy-L-arabinose arabinosyl transferase 2, found in Pseudomonas fluorescens (strain ATCC BAA-477 / NRRL B-23932 / Pf-5).